Here is a 324-residue protein sequence, read N- to C-terminus: MSFAANAKKELTQLELVSCCARAELSALIRMNGSLSLGNKQVGLDVTTENAAIARRIYTLIKHLYPNIHIELLVQKKMRLKKNNVYMVRISKEARQLLEDLRILNGSFQFIRDISPEIVKESCCKRAYLRGAFLAGGSINHPETSSYHLEIFSLYEEHNQAICELMNGFSLSAKTLERKKGFITYLKESEKITEFLNIIGAHQALLYFEDVRIMKDMRNSVNRLVNCETANLNKTVGAALRQVENIRFIDKTIGLENLPPKLQEVAKLRVKHQDVTLKELGEMMQGGKVSKSGINHRLRKIDEFADKLRNGTFDAKKLNTHRGK.

A DNA-binding region (H-T-H motif) is located at residues 276–310; that stretch reads TLKELGEMMQGGKVSKSGINHRLRKIDEFADKLRN.

Belongs to the WhiA family.

Its function is as follows. Involved in cell division and chromosome segregation. The protein is Probable cell division protein WhiA of Shouchella clausii (strain KSM-K16) (Alkalihalobacillus clausii).